A 418-amino-acid chain; its full sequence is MENKLLCWWLYWPCVYSSIIATIISFYTITRHLLNYRKPYEQRLSIRILLLVPIFSVSCASGIIKPEAAQFYVDPIREFYEAFVIYTFFTFLTLLLGGERNIITVLSLNHAPTRHPIPLIGKICKPIDLSDPFDFLFVKKGILQYVWFKPFYCFGTLICSAWKLPKFEIFLNVFYNISVTWSLYSLALFWKCLYPELTPYKPWLKFLCVKLIIFASYWQSIIIQGLVVTGKLGTGNQDRTSGYVYKNGLLCIEMVPFAILHAVAFPWNKYTAFSIPYGARMKFIYALKDFLGCGDLIWDFKQTLFAGPLYYNYRNFDPEAMDLLSTRQQSGATMERLKHGLRFTDNGRNSYWVAYGSIDNNLVPESIEESWEDDIAGQRTFPEDPNYPVVHDYTMGHRYSRSMNDLRRDVQSRSSMAC.

Over 1–5 (MENKL) the chain is Extracellular. The chain crosses the membrane as a helical span at residues 6-26 (LCWWLYWPCVYSSIIATIISF). Over 27-43 (YTITRHLLNYRKPYEQR) the chain is Cytoplasmic. A helical transmembrane segment spans residues 44–64 (LSIRILLLVPIFSVSCASGII). Residues 65–78 (KPEAAQFYVDPIRE) lie on the Extracellular side of the membrane. Residues 79–99 (FYEAFVIYTFFTFLTLLLGGE) traverse the membrane as a helical segment. The Cytoplasmic portion of the chain corresponds to 100 to 141 (RNIITVLSLNHAPTRHPIPLIGKICKPIDLSDPFDFLFVKKG). A helical transmembrane segment spans residues 142-162 (ILQYVWFKPFYCFGTLICSAW). At 163 to 168 (KLPKFE) the chain is on the extracellular side. A helical membrane pass occupies residues 169 to 189 (IFLNVFYNISVTWSLYSLALF). The Cytoplasmic segment spans residues 190 to 205 (WKCLYPELTPYKPWLK). A helical membrane pass occupies residues 206 to 226 (FLCVKLIIFASYWQSIIIQGL). At 227 to 246 (VVTGKLGTGNQDRTSGYVYK) the chain is on the extracellular side. A helical transmembrane segment spans residues 247–267 (NGLLCIEMVPFAILHAVAFPW). Topologically, residues 268 to 418 (NKYTAFSIPY…DVQSRSSMAC (151 aa)) are cytoplasmic. The tract at residues 379–402 (RTFPEDPNYPVVHDYTMGHRYSRS) is ATG8-interacting region.

Belongs to the TMEM184 family. In terms of assembly, interacts with ATG8.

The protein resides in the vacuole membrane. Functionally, vacuole membrane protein that recruits ATG8 to facilitate the degradation of vacuolar integral membrane proteins during early-stationary vacuole turnover (EVT) when cells enter stationary phase. The chain is Vacuole membrane protein HFL1 from Saccharomyces cerevisiae (strain ATCC 204508 / S288c) (Baker's yeast).